Here is a 217-residue protein sequence, read N- to C-terminus: Translation initiation factor IF-3 (217 aa).

The disordered stretch occupies residues 170-217; it reads KKTEAMAEARQAQEARKADAKANPGKSQNAAETDDAEAEAPAEAPAEA. Basic and acidic residues predominate over residues 172–189; it reads TEAMAEARQAQEARKADA.

Belongs to the IF-3 family. Monomer.

The protein resides in the cytoplasm. IF-3 binds to the 30S ribosomal subunit and shifts the equilibrium between 70S ribosomes and their 50S and 30S subunits in favor of the free subunits, thus enhancing the availability of 30S subunits on which protein synthesis initiation begins. This is Translation initiation factor IF-3 from Streptomyces coelicolor (strain ATCC BAA-471 / A3(2) / M145).